A 336-amino-acid polypeptide reads, in one-letter code: Tyrosine recombinase XerC (336 aa).

One can recognise a Core-binding (CB) domain in the interval 14 to 106 (VANCRWLGEF…SVKSFYRFLL (93 aa)). One can recognise a Tyr recombinase domain in the interval 127 to 330 (KIPDFLSEEE…TFNRLRDAYT (204 aa)). Catalysis depends on residues R183, K207, H282, R285, and H308. Y317 serves as the catalytic O-(3'-phospho-DNA)-tyrosine intermediate.

It belongs to the 'phage' integrase family. XerC subfamily. As to quaternary structure, forms a cyclic heterotetrameric complex composed of two molecules of XerC and two molecules of XerD.

Its subcellular location is the cytoplasm. Functionally, site-specific tyrosine recombinase, which acts by catalyzing the cutting and rejoining of the recombining DNA molecules. The XerC-XerD complex is essential to convert dimers of the bacterial chromosome into monomers to permit their segregation at cell division. It also contributes to the segregational stability of plasmids. In Chlorobaculum tepidum (strain ATCC 49652 / DSM 12025 / NBRC 103806 / TLS) (Chlorobium tepidum), this protein is Tyrosine recombinase XerC.